Consider the following 216-residue polypeptide: Ras-related protein Rab-2B (216 aa).

GDP-binding residues include glycine 16, valine 17, glycine 18, lysine 19, serine 20, and cysteine 21. GTP contacts are provided by glycine 16, valine 17, glycine 18, lysine 19, serine 20, cysteine 21, and threonine 38. Serine 20 is a binding site for Mg(2+). Residues leucine 37–glutamate 42 carry the Switch 1 motif. Mg(2+) is bound by residues threonine 38 and aspartate 61. The short motif at alanine 63 to threonine 72 is the Switch 2 element. The GTP site is built by glycine 64, asparagine 119, lysine 120, aspartate 122, alanine 150, and lysine 151. Residue asparagine 119 coordinates GDP. GDP is bound by residues aspartate 122, alanine 150, and lysine 151. Residues proline 189 to cysteine 216 form a disordered region. The residue at position 202 (serine 202) is a Phosphoserine. Residues cysteine 215 and cysteine 216 are each lipidated (S-geranylgeranyl cysteine).

This sequence belongs to the small GTPase superfamily. Rab family. As to quaternary structure, interacts (in GTP-bound form) with GARIN4 (via N-terminus). Interacts (in GTP-bound form) with GARIN5A. Interacts (in GTP-bound form) with GARIN1B. Interacts with VPS39 and VPS41. It depends on Mg(2+) as a cofactor. In terms of tissue distribution, expressed in kidney, prostate, lung, liver, thymus, colon, pancreas, and skeletal muscle, and low levels in placenta. Not detected in heart, brain, spleen, testis, ovary, small intestine and leukocyte.

Its subcellular location is the cell membrane. The protein localises to the endoplasmic reticulum membrane. The protein resides in the golgi apparatus membrane. It is found in the cytoplasmic vesicle. It localises to the secretory vesicle. Its subcellular location is the acrosome. The protein localises to the autophagosome membrane. It catalyses the reaction GTP + H2O = GDP + phosphate + H(+). Regulated by guanine nucleotide exchange factors (GEFs) which promote the exchange of bound GDP for free GTP, GTPase activating proteins (GAPs) which increase the GTP hydrolysis activity, and GDP dissociation inhibitors (GDIs) which inhibit the dissociation of the nucleotide from the GTPase. The small GTPases Rab are key regulators of intracellular membrane trafficking, from the formation of transport vesicles to their fusion with membranes. Rabs cycle between active GTP-bound and inactive GDP-bound states. In their active state, drive transport of vesicular carriers from donor organelles to acceptor organelles to regulate the membrane traffic that maintains organelle identity and morphology. Regulates the compacted morphology of the Golgi. Promotes cytosolic DNA-induced innate immune responses. Regulates IFN responses against DNA viruses by regulating the CGAS-STING signaling axis. Together with RAB2A redundantly required for efficient autophagic flux. The polypeptide is Ras-related protein Rab-2B (Homo sapiens (Human)).